The following is a 382-amino-acid chain: UDP-4-amino-4-deoxy-L-arabinose--oxoglutarate aminotransferase (382 aa).

K183 carries the N6-(pyridoxal phosphate)lysine modification.

The protein belongs to the DegT/DnrJ/EryC1 family. ArnB subfamily. Homodimer. Pyridoxal 5'-phosphate is required as a cofactor.

The catalysed reaction is UDP-4-amino-4-deoxy-beta-L-arabinose + 2-oxoglutarate = UDP-beta-L-threo-pentopyranos-4-ulose + L-glutamate. It participates in nucleotide-sugar biosynthesis; UDP-4-deoxy-4-formamido-beta-L-arabinose biosynthesis; UDP-4-deoxy-4-formamido-beta-L-arabinose from UDP-alpha-D-glucuronate: step 2/3. Its pathway is bacterial outer membrane biogenesis; lipopolysaccharide biosynthesis. Its function is as follows. Catalyzes the conversion of UDP-4-keto-arabinose (UDP-Ara4O) to UDP-4-amino-4-deoxy-L-arabinose (UDP-L-Ara4N). The modified arabinose is attached to lipid A and is required for resistance to polymyxin and cationic antimicrobial peptides. This chain is UDP-4-amino-4-deoxy-L-arabinose--oxoglutarate aminotransferase, found in Pseudomonas aeruginosa (strain ATCC 15692 / DSM 22644 / CIP 104116 / JCM 14847 / LMG 12228 / 1C / PRS 101 / PAO1).